The sequence spans 274 residues: Lectizyme (274 aa).

Residues 1 to 16 (MKFFAVFALCVASVSA) form the signal peptide. Residues 32–268 (IINGHEAEKG…FDKWIEDSIE (237 aa)) form the Peptidase S1 domain. The cysteines at positions 57 and 73 are disulfide-linked. Active-site charge relay system residues include H72 and D119. Intrachain disulfides connect C188–C204 and C215–C244. The active-site Charge relay system is S219.

The protein belongs to the peptidase S1 family. As to expression, expressed in the midgut.

It localises to the secreted. Protein with lectin and protease activity involved in the establishment of trypanosome infections in tsetse flies. Binds D-glucosamine and agglutinates bloodstream-form trypanosomes and rabbit red blood cells. Capable of inducing transformation of bloodstream-form trypanosomes into procyclic (midgut) forms in vitro. In Glossina austeni (Savannah tsetse fly), this protein is Lectizyme (Gpl).